Here is a 313-residue protein sequence, read N- to C-terminus: Type II restriction enzyme BsuMI component YdiR (313 aa).

Positions 289-313 (FVSGDIVDENATTSSDDLPEDFENN) are disordered.

As to quaternary structure, bsuMI restriction activity requires YdiR, YdiS and YdjA.

It carries out the reaction Endonucleolytic cleavage of DNA to give specific double-stranded fragments with terminal 5'-phosphates.. Its function is as follows. A P subtype restriction enzyme that recognizes the double-stranded sequence 5'-CTCGAG-3'; the cleavage site is unknown. The sequence is that of Type II restriction enzyme BsuMI component YdiR (ydiR) from Bacillus subtilis (strain 168).